Here is a 429-residue protein sequence, read N- to C-terminus: Adenylosuccinate synthetase (429 aa).

Residues 12–18 and 40–42 each bind GTP; these read GDEGKGK and GHT. Aspartate 13 functions as the Proton acceptor in the catalytic mechanism. Positions 13 and 40 each coordinate Mg(2+). Residues 13–16, 38–41, threonine 129, arginine 143, glutamine 223, threonine 238, and arginine 302 contribute to the IMP site; these read DEGK and NAGH. The active-site Proton donor is the histidine 41. 298 to 304 contacts substrate; the sequence is VVTGRKR. GTP-binding positions include arginine 304, 330–332, and 412–414; these read KLD and STS.

Belongs to the adenylosuccinate synthetase family. As to quaternary structure, homodimer. Requires Mg(2+) as cofactor.

The protein resides in the cytoplasm. The catalysed reaction is IMP + L-aspartate + GTP = N(6)-(1,2-dicarboxyethyl)-AMP + GDP + phosphate + 2 H(+). It participates in purine metabolism; AMP biosynthesis via de novo pathway; AMP from IMP: step 1/2. Plays an important role in the de novo pathway of purine nucleotide biosynthesis. Catalyzes the first committed step in the biosynthesis of AMP from IMP. This Brucella abortus (strain 2308) protein is Adenylosuccinate synthetase.